The chain runs to 393 residues: High mobility group protein DSP1 (393 aa).

The tract at residues 153–179 (QMQQQQQQQNVINSASPMSRVKADAKP) is disordered. 2 consecutive DNA-binding regions (HMG box) follow at residues 179–249 (PRGR…QNYV) and 271–339 (PKRS…TEYK). Low complexity predominate over residues 364–374 (LLAAAAQQQHQ). A disordered region spans residues 364–393 (LLAAAAQQQHQQLEEQHDDDDGDGDDDENQ). Over residues 379–393 (QHDDDDGDGDDDENQ) the composition is skewed to acidic residues.

This sequence belongs to the HMGB family.

Its subcellular location is the nucleus. It localises to the chromosome. In terms of biological role, binds preferentially single-stranded DNA and unwinds double-stranded DNA. The sequence is that of High mobility group protein DSP1 (Dsp1) from Drosophila melanogaster (Fruit fly).